Consider the following 582-residue polypeptide: Putative phospholipase B-like 2 (582 aa).

A signal peptide spans 1-42; it reads MTRLIRSKKQFLIRSLHSVFYYLGSLLHSTFEMNVFIGLLLA. Asn-91, Asn-141, Asn-178, Asn-224, and Asn-318 each carry an N-linked (GlcNAc...) asparagine glycan. A disulfide bridge connects residues Cys-139 and Cys-146. A disulfide bond links Cys-480 and Cys-482. The N-linked (GlcNAc...) asparagine glycan is linked to Asn-502.

It belongs to the phospholipase B-like family.

Its subcellular location is the secreted. Putative phospholipase. This chain is Putative phospholipase B-like 2, found in Caenorhabditis elegans.